The chain runs to 230 residues: MQKIGILGAMREEITPILELFGVDFEEIPLGGNVFHKGVYHNKEIIVAYSKIGKVHSTLTTTSMILAFGVQKVLFSGVAGSLVKDLKINDLLVATQLVQHDVDLSAFDHPLGFIPESAIFIETSGSLNALAKKIANEQHIALKEGVIASGDQFVHSKERKEFLVSEFKASAVEMEGASVAFVCQKFGVPCCVLRSISDNADEKAGMSFDEFLEKSAHTSAKFLKSMVDEL.

The Proton acceptor role is filled by E13. Residues G80, V154, and 174 to 175 (ME) each bind substrate. The Proton donor role is filled by D198.

The protein belongs to the PNP/UDP phosphorylase family. MtnN subfamily. Homodimer.

It catalyses the reaction 6-amino-6-deoxyfutalosine + H2O = dehypoxanthine futalosine + adenine. It carries out the reaction S-adenosyl-L-homocysteine + H2O = S-(5-deoxy-D-ribos-5-yl)-L-homocysteine + adenine. The catalysed reaction is S-methyl-5'-thioadenosine + H2O = 5-(methylsulfanyl)-D-ribose + adenine. The enzyme catalyses 5'-deoxyadenosine + H2O = 5-deoxy-D-ribose + adenine. It functions in the pathway quinol/quinone metabolism; menaquinone biosynthesis. Its pathway is amino-acid biosynthesis; L-methionine biosynthesis via salvage pathway; S-methyl-5-thio-alpha-D-ribose 1-phosphate from S-methyl-5'-thioadenosine (hydrolase route): step 1/2. Its activity is regulated as follows. Is inhibited by the transition state analog BuT-DADMe-ImmA. This compound is also able to inhibit H.pylori growth and is more efficient than antibiotics commonly used in ulcer therapy. In terms of biological role, catalyzes the direct conversion of aminodeoxyfutalosine (AFL) into dehypoxanthine futalosine (DHFL) and adenine via the hydrolysis of the N-glycosidic bond; this reaction seems to represent an essential step in the menaquinone biosynthesis pathway in Helicobacter species. Also catalyzes the hydrolysis of 5'-methylthioadenosine (MTA) to adenine and 5'-methylthioribose. Can also probably use S-adenosylhomocysteine (SAH) as substrate, leading to adenine and S-ribosylhomocysteine. These other activities highlight the tremendous versatility of the enzyme, which also plays key roles in S-adenosylmethionine recycling and in the biosynthesis of the quorum-sensing molecule autoinducer-2. This chain is Aminodeoxyfutalosine nucleosidase (mtnN), found in Helicobacter pylori (strain J99 / ATCC 700824) (Campylobacter pylori J99).